An 89-amino-acid chain; its full sequence is Small ribosomal subunit protein uS15 (89 aa).

The segment covering 1–21 has biased composition (basic and acidic residues); that stretch reads MALTTEEKKQVLSEYGLHETD. The segment at 1-24 is disordered; the sequence is MALTTEEKKQVLSEYGLHETDTGS.

It belongs to the universal ribosomal protein uS15 family. As to quaternary structure, part of the 30S ribosomal subunit. Forms a bridge to the 50S subunit in the 70S ribosome, contacting the 23S rRNA.

Functionally, one of the primary rRNA binding proteins, it binds directly to 16S rRNA where it helps nucleate assembly of the platform of the 30S subunit by binding and bridging several RNA helices of the 16S rRNA. In terms of biological role, forms an intersubunit bridge (bridge B4) with the 23S rRNA of the 50S subunit in the ribosome. This chain is Small ribosomal subunit protein uS15, found in Rhodococcus jostii (strain RHA1).